Reading from the N-terminus, the 316-residue chain is Ribonuclease Z (316 aa).

H61, H63, D65, H66, H152, D220, and H279 together coordinate Zn(2+). Residue D65 is the Proton acceptor of the active site.

Belongs to the RNase Z family. Homodimer. Zn(2+) is required as a cofactor.

The enzyme catalyses Endonucleolytic cleavage of RNA, removing extra 3' nucleotides from tRNA precursor, generating 3' termini of tRNAs. A 3'-hydroxy group is left at the tRNA terminus and a 5'-phosphoryl group is left at the trailer molecule.. Its function is as follows. Zinc phosphodiesterase, which displays some tRNA 3'-processing endonuclease activity. Probably involved in tRNA maturation, by removing a 3'-trailer from precursor tRNA. In Clostridium perfringens (strain ATCC 13124 / DSM 756 / JCM 1290 / NCIMB 6125 / NCTC 8237 / Type A), this protein is Ribonuclease Z.